The chain runs to 183 residues: Gamma-crystallin N (183 aa).

4 Beta/gamma crystallin 'Greek key' domains span residues 6-46, 47-89, 95-136, and 138-180; these read GKIT…RVES, GAWV…RPVG, FRID…KVYG, and GAWV…RRVL.

This sequence belongs to the beta/gamma-crystallin family. Monomer. As to expression, primordially eye-specific. Present in lens nucleus. In the retina, expression in observed in the outer plexiform layer (containing photoreceptors axons and synapses) and photoreceptor outer segments (at protein level). Also detected in the auditory hindbrain where it is highly expressed in the medial nucleus of the trapezoid body, but also present in other nuclei of the superior olivary complex.

Crystallins are the dominant structural components of the vertebrate eye lens. Also plays an important role for integrity and function of auditory nuclei. In Mus musculus (Mouse), this protein is Gamma-crystallin N.